Reading from the N-terminus, the 78-residue chain is Translational regulator CsrA (78 aa).

It belongs to the CsrA/RsmA family. As to quaternary structure, homodimer; the beta-strands of each monomer intercalate to form a hydrophobic core, while the alpha-helices form wings that extend away from the core.

The protein resides in the cytoplasm. In terms of biological role, a translational regulator that binds mRNA to regulate translation initiation and/or mRNA stability. Usually binds in the 5'-UTR at or near the Shine-Dalgarno sequence preventing ribosome-binding, thus repressing translation. Its main target seems to be the major flagellin gene, while its function is anatagonized by FliW. The polypeptide is Translational regulator CsrA (Caldicellulosiruptor bescii (strain ATCC BAA-1888 / DSM 6725 / KCTC 15123 / Z-1320) (Anaerocellum thermophilum)).